A 291-amino-acid chain; its full sequence is Methionine aminopeptidase (291 aa).

His118 contributes to the substrate binding site. A divalent metal cation contacts are provided by Asp135, Asp146, and His209. His216 is a substrate binding site. A divalent metal cation is bound by residues Glu241 and Glu273.

Belongs to the peptidase M24A family. Methionine aminopeptidase type 1 subfamily. Monomer. The cofactor is Co(2+). Requires Zn(2+) as cofactor. Mn(2+) is required as a cofactor. Fe(2+) serves as cofactor.

It catalyses the reaction Release of N-terminal amino acids, preferentially methionine, from peptides and arylamides.. Functionally, removes the N-terminal methionine from nascent proteins. The N-terminal methionine is often cleaved when the second residue in the primary sequence is small and uncharged (Met-Ala-, Cys, Gly, Pro, Ser, Thr, or Val). Requires deformylation of the N(alpha)-formylated initiator methionine before it can be hydrolyzed. The polypeptide is Methionine aminopeptidase (Chlamydia pneumoniae (Chlamydophila pneumoniae)).